The primary structure comprises 363 residues: 3-isopropylmalate dehydrogenase (363 aa).

78 to 91 (GKKWDDLPINQRPE) lines the NAD(+) pocket. Substrate-binding residues include Arg-99, Arg-109, Arg-138, and Asp-227. Mg(2+)-binding residues include Asp-227, Asp-251, and Asp-255. NAD(+) is bound at residue 285–297 (GSAPDIEGKNIAN).

This sequence belongs to the isocitrate and isopropylmalate dehydrogenases family. LeuB type 1 subfamily. Homodimer. Mg(2+) is required as a cofactor. It depends on Mn(2+) as a cofactor.

It is found in the cytoplasm. The catalysed reaction is (2R,3S)-3-isopropylmalate + NAD(+) = 4-methyl-2-oxopentanoate + CO2 + NADH. Its pathway is amino-acid biosynthesis; L-leucine biosynthesis; L-leucine from 3-methyl-2-oxobutanoate: step 3/4. In terms of biological role, catalyzes the oxidation of 3-carboxy-2-hydroxy-4-methylpentanoate (3-isopropylmalate) to 3-carboxy-4-methyl-2-oxopentanoate. The product decarboxylates to 4-methyl-2 oxopentanoate. This chain is 3-isopropylmalate dehydrogenase, found in Buchnera aphidicola subsp. Uroleucon rudbeckiae.